The chain runs to 222 residues: Cytidylate kinase (222 aa).

10–18 (GTSSSGKSV) contributes to the ATP binding site.

Belongs to the cytidylate kinase family. Type 1 subfamily.

It localises to the cytoplasm. It carries out the reaction CMP + ATP = CDP + ADP. The catalysed reaction is dCMP + ATP = dCDP + ADP. In Mycoplasma capricolum subsp. capricolum (strain California kid / ATCC 27343 / NCTC 10154), this protein is Cytidylate kinase.